Reading from the N-terminus, the 465-residue chain is GTPase Der (465 aa).

2 EngA-type G domains span residues 3 to 166 (FLVA…LNEY) and 184 to 358 (IHFS…ACAN). Residues 9–16 (GRANVGKS), 56–60 (DTGGI), 118–121 (NKVD), 190–197 (GRPNVGKS), 237–241 (DTAGV), and 302–305 (NKWD) each bind GTP. The KH-like domain occupies 359 to 443 (KKITTADATR…PIVFEFKQSE (85 aa)). A disordered region spans residues 446–465 (FADRKNKRSKDEGSKSKKVK).

Belongs to the TRAFAC class TrmE-Era-EngA-EngB-Septin-like GTPase superfamily. EngA (Der) GTPase family. In terms of assembly, associates with the 50S ribosomal subunit.

In terms of biological role, GTPase that plays an essential role in the late steps of ribosome biogenesis. The chain is GTPase Der from Francisella tularensis subsp. holarctica (strain FTNF002-00 / FTA).